The primary structure comprises 160 residues: Small ribosomal subunit protein bS6 (160 aa).

Residues 96–160 (RKVKRFIPRA…PRTRKVSKEQ (65 aa)) form a disordered region. Positions 126 to 145 (TTDASKTEASTEATASKQSE) are enriched in low complexity. Over residues 151–160 (PRTRKVSKEQ) the composition is skewed to basic residues.

It belongs to the bacterial ribosomal protein bS6 family.

Functionally, binds together with bS18 to 16S ribosomal RNA. This Metamycoplasma arthritidis (strain 158L3-1) (Mycoplasma arthritidis) protein is Small ribosomal subunit protein bS6.